A 129-amino-acid chain; its full sequence is uncharacterized protein (129 aa).

Over residues 86–96 the composition is skewed to acidic residues; sequence NDGFSSDDEPE. The interval 86-129 is disordered; that stretch reads NDGFSSDDEPEEHVILTEDNQGEPSETPQATFDITEFIKTEDED. Polar residues predominate over residues 103-117; it reads EDNQGEPSETPQATF.

Belongs to the asfivirus D129L family.

This is an uncharacterized protein from African swine fever virus (isolate Tick/South Africa/Pretoriuskop Pr4/1996) (ASFV).